The sequence spans 27 residues: Fructokinase (27 aa).

It belongs to the ROK (NagC/XylR) family. Homodimer. The cofactor is Mg(2+).

The catalysed reaction is D-fructose + ATP = D-fructose 6-phosphate + ADP + H(+). Inhibition by zinc ions. The polypeptide is Fructokinase (Fusobacterium mortiferum).